The chain runs to 499 residues: Ran-binding protein 3 (499 aa).

Positions 1 to 10 (MADLANEEKP) are enriched in basic and acidic residues. 3 disordered regions span residues 1 to 128 (MADL…GTNG), 141 to 196 (AASP…VFGQ), and 264 to 303 (LSPP…SLAE). Ala2 carries the N-acetylalanine modification. An N6-acetyllysine mark is found at Lys9 and Lys21. Phosphoserine is present on residues Ser32, Ser33, and Ser40. Residues 49-57 (PPVKRERTS) carry the Nuclear localization signal motif. Thr56 bears the Phosphothreonine mark. 2 stretches are compositionally biased toward polar residues: residues 57–66 (SSLTQFPPSQ) and 116–128 (ALSQ…GTNG). Ser58 carries the post-translational modification Phosphoserine. A phosphoserine mark is found at Ser151, Ser265, Ser285, Ser287, and Ser304. The RanBD1 domain occupies 310 to 450 (KATARKCLLE…LALRSRVEQE (141 aa)). Residues 447–499 (VEQEQEAKMPVPEPGAAPSNEEDDSDDDDVLAPSGATAAGAGDEGDGQTTGST) are disordered. Residues 466-476 (NEEDDSDDDDV) are compositionally biased toward acidic residues. Ser471 is subject to Phosphoserine. The segment covering 481-499 (GATAAGAGDEGDGQTTGST) has biased composition (low complexity).

Interacts with CHC1 in a Ran-stimulated manner. Interacts with XPO1. Interacts (via its C-terminal R domain) with SMAD2 (dephosphorylated form via its MH1 and MH2 domains); the interaction results in the nuclear export of SMAD2 and termination of the TGF-beta signaling. Interacts (via its C-terminal R domain) with SMAD3 (dephosphorylated form via its MH1 domain); the interaction results in the nuclear export of SMAD3 and termination of the TGF-beta signaling. Phosphorylation at Ser-58 promotes its import into the nucleus.

The protein localises to the cytoplasm. The protein resides in the nucleus. Functionally, acts as a cofactor for XPO1/CRM1-mediated nuclear export, perhaps as export complex scaffolding protein. Bound to XPO1/CRM1, stabilizes the XPO1/CRM1-cargo interaction. In the absence of Ran-bound GTP prevents binding of XPO1/CRM1 to the nuclear pore complex. Binds to CHC1/RCC1 and increases the guanine nucleotide exchange activity of CHC1/RCC1. Recruits XPO1/CRM1 to CHC1/RCC1 in a Ran-dependent manner. Negative regulator of TGF-beta signaling through interaction with the R-SMAD proteins, SMAD2 and SMAD3, and mediating their nuclear export. The chain is Ran-binding protein 3 (RANBP3) from Macaca fascicularis (Crab-eating macaque).